A 195-amino-acid chain; its full sequence is dTTP/UTP pyrophosphatase (195 aa).

The active-site Proton acceptor is Asp-76.

Belongs to the Maf family. YhdE subfamily. It depends on a divalent metal cation as a cofactor.

It is found in the cytoplasm. It carries out the reaction dTTP + H2O = dTMP + diphosphate + H(+). It catalyses the reaction UTP + H2O = UMP + diphosphate + H(+). Nucleoside triphosphate pyrophosphatase that hydrolyzes dTTP and UTP. May have a dual role in cell division arrest and in preventing the incorporation of modified nucleotides into cellular nucleic acids. The sequence is that of dTTP/UTP pyrophosphatase from Shewanella frigidimarina (strain NCIMB 400).